The primary structure comprises 464 residues: NADH dehydrogenase [ubiquinone] flavoprotein 1, mitochondrial (464 aa).

The N-terminal 20 residues, 1–20 (MLAARHFLGGLVPVRVSVRF), are a transit peptide targeting the mitochondrion. N6-acetyllysine; alternate is present on K81. The residue at position 81 (K81) is an N6-succinyllysine; alternate. 87–96 (GRGGAGFPTG) contributes to the NADH binding site. The residue at position 104 (K104) is an N6-acetyllysine. 199-247 (RGAGAYICGEETALIESIEGKQGKPRLKPPFPADVGVFGCPTTVANVET) contacts FMN. The residue at position 257 (R257) is an Omega-N-methylarginine. Residue K375 is modified to N6-acetyllysine. C379, C382, C385, and C425 together coordinate [4Fe-4S] cluster.

It belongs to the complex I 51 kDa subunit family. In terms of assembly, core subunit of respiratory chain NADH dehydrogenase (Complex I) which is composed of 45 different subunits. This is a component of the flavoprotein-sulfur (FP) fragment of the enzyme. Interacts with RAB5IF. FMN is required as a cofactor. Requires [4Fe-4S] cluster as cofactor.

It localises to the mitochondrion inner membrane. It catalyses the reaction a ubiquinone + NADH + 5 H(+)(in) = a ubiquinol + NAD(+) + 4 H(+)(out). Its function is as follows. Core subunit of the mitochondrial membrane respiratory chain NADH dehydrogenase (Complex I) which catalyzes electron transfer from NADH through the respiratory chain, using ubiquinone as an electron acceptor. Part of the peripheral arm of the enzyme, where the electrons from NADH are accepted by flavin mononucleotide (FMN) and then passed along a chain of iron-sulfur clusters by electron tunnelling to the final acceptor ubiquinone. Contains FMN, which is the initial electron acceptor as well as one iron-sulfur cluster. This is NADH dehydrogenase [ubiquinone] flavoprotein 1, mitochondrial from Mus musculus (Mouse).